Consider the following 272-residue polypeptide: Thymidine phosphorylase (272 aa).

It belongs to the thymidine/pyrimidine-nucleoside phosphorylase family. In terms of assembly, homodimer.

The enzyme catalyses thymidine + phosphate = 2-deoxy-alpha-D-ribose 1-phosphate + thymine. Its function is as follows. The enzymes which catalyze the reversible phosphorolysis of pyrimidine nucleosides are involved in the degradation of these compounds and in their utilization as carbon and energy sources, or in the rescue of pyrimidine bases for nucleotide synthesis. The polypeptide is Thymidine phosphorylase (deoA) (Metamycoplasma hominis (Mycoplasma hominis)).